A 314-amino-acid chain; its full sequence is Hydroxyethylthiazole kinase (314 aa).

Methionine 70 is a binding site for substrate. ATP-binding residues include arginine 145 and serine 217. Glycine 244 contacts substrate.

It belongs to the Thz kinase family. The cofactor is Mg(2+).

It catalyses the reaction 5-(2-hydroxyethyl)-4-methylthiazole + ATP = 4-methyl-5-(2-phosphooxyethyl)-thiazole + ADP + H(+). Its pathway is cofactor biosynthesis; thiamine diphosphate biosynthesis; 4-methyl-5-(2-phosphoethyl)-thiazole from 5-(2-hydroxyethyl)-4-methylthiazole: step 1/1. Its function is as follows. Catalyzes the phosphorylation of the hydroxyl group of 4-methyl-5-beta-hydroxyethylthiazole (THZ). This chain is Hydroxyethylthiazole kinase, found in Bifidobacterium longum (strain DJO10A).